Here is a 202-residue protein sequence, read N- to C-terminus: Imidazoleglycerol-phosphate dehydratase (202 aa).

Belongs to the imidazoleglycerol-phosphate dehydratase family.

It is found in the cytoplasm. It catalyses the reaction D-erythro-1-(imidazol-4-yl)glycerol 3-phosphate = 3-(imidazol-4-yl)-2-oxopropyl phosphate + H2O. It functions in the pathway amino-acid biosynthesis; L-histidine biosynthesis; L-histidine from 5-phospho-alpha-D-ribose 1-diphosphate: step 6/9. This is Imidazoleglycerol-phosphate dehydratase from Corynebacterium glutamicum (strain ATCC 13032 / DSM 20300 / JCM 1318 / BCRC 11384 / CCUG 27702 / LMG 3730 / NBRC 12168 / NCIMB 10025 / NRRL B-2784 / 534).